Here is a 314-residue protein sequence, read N- to C-terminus: tRNA dimethylallyltransferase (314 aa).

Residue 9-16 coordinates ATP; that stretch reads GPTAVGKT. 11–16 serves as a coordination point for substrate; sequence TAVGKT. Residues 34-37 are interaction with substrate tRNA; sequence DSVQ.

It belongs to the IPP transferase family. In terms of assembly, monomer. Mg(2+) is required as a cofactor.

The catalysed reaction is adenosine(37) in tRNA + dimethylallyl diphosphate = N(6)-dimethylallyladenosine(37) in tRNA + diphosphate. Its function is as follows. Catalyzes the transfer of a dimethylallyl group onto the adenine at position 37 in tRNAs that read codons beginning with uridine, leading to the formation of N6-(dimethylallyl)adenosine (i(6)A). This Desulfitobacterium hafniense (strain Y51) protein is tRNA dimethylallyltransferase.